The primary structure comprises 156 residues: Cell division protein SepF (156 aa).

The disordered stretch occupies residues Asn-30–Lys-49.

Belongs to the SepF family. Homodimer. Interacts with FtsZ.

It localises to the cytoplasm. Cell division protein that is part of the divisome complex and is recruited early to the Z-ring. Probably stimulates Z-ring formation, perhaps through the cross-linking of FtsZ protofilaments. Its function overlaps with FtsA. The chain is Cell division protein SepF from Exiguobacterium sp. (strain ATCC BAA-1283 / AT1b).